We begin with the raw amino-acid sequence, 619 residues long: Sodium-dependent dopamine transporter (619 aa).

Residues 1 to 56 (MSKSKCSVGPMSSVVAPAKEPNAVGPREVELILVKEQNGVQLTNSTLINPPQTPVE) lie on the Cytoplasmic side of the membrane. A discontinuously helical membrane pass occupies residues 57–95 (VQERETWSKKIDFLLSVIGFAVDLANVWRFPYLCYKNGG). Residues G75, A77, V78, D79, and N82 each contribute to the Na(+) site. D79 serves as a coordination point for dopamine. 2 helical membrane-spanning segments follow: residues 96–127 (GAFLVPYLLFMVIAGMPLFYMELALGQFNREG) and 128–171 (AAGV…FSSF). Residues S149 and G153 each contribute to the dopamine site. Over 172 to 235 (TMDLPWIHCN…SRGIDDLGPP (64 aa)) the chain is Extracellular. A disulfide bridge links C180 with C189. Residues N181, N188, N196, and N204 are each glycosylated (N-linked (GlcNAc...) asparagine). Helical transmembrane passes span 236–255 (RWQLTACLVLVIVLLYFSLW) and 256–286 (KGVKTSGKVVWITATMPYVVLTALLLRGVTL). The Extracellular portion of the chain corresponds to 287–305 (PGAMDGIRAYLSVDFYRLC). The chain crosses the membrane as a discontinuously helical span at residues 306-334 (EASVWIDAATQVCFSLGVGFGVLIAFSSY). Q316 contributes to the chloride binding site. F319 is a dopamine binding site. Positions 320 and 352 each coordinate Na(+). A chloride-binding site is contributed by S320. Residues 335–375 (NKFTNNCYRDAIITTSINSLTSFSSGFVVFSFLGYMAQKHN) traverse the membrane as a helical segment. S356 provides a ligand contact to chloride. Residues 376–399 (VPIRDVATDGPGLIFIIYPEAIAT) are Extracellular-facing. Transmembrane regions (helical) follow at residues 400-441 (LPLS…QLLH), 442-465 (RHRELFTLGIVLATFLLSLFCVTN), and 466-498 (GGIYVFTLLDHFAAGTSILFGVLIEAIGVAWFY). L417, D420, and S421 together coordinate Na(+). S421 and A422 together coordinate dopamine. The Cytoplasmic segment spans residues 499 to 515 (GVQQFSDDIKQMTGQRP). The helical transmembrane segment at 516–541 (NLYWRLCWKLVSPCFLLYVVVVSIVT) threads the bilayer. Residues 542–552 (FRPPHYGAYIF) are Extracellular-facing. A helical transmembrane segment spans residues 553 to 582 (PDWANALGWIIATSSMAMVPIYATYKFCSL). Residues 560-589 (GWIIATSSMAMVPIYATYKFCSLPGSFREK) are interaction with TGFB1I1. Over 583-619 (PGSFREKLAYAITPEKDRQLVDRGEVRQFTLRHWLLV) the chain is Cytoplasmic.

It belongs to the sodium:neurotransmitter symporter (SNF) (TC 2.A.22) family. SLC6A3 subfamily. Monomer. Homooligomer; disulfide-linked. Interacts with PRKCABP and TGFB1I1. Interacts (via N-terminus) with SYNGR3 (via N-terminus). Interacts with SLC18A2. Interacts with TOR1A (ATP-bound); TOR1A regulates SLC6A3 subcellular location. Interacts with alpha-synuclein/SNCA. Interacts with SEPTIN4. Found in the substantia nigra and ventral tegmental dopamine neurons, in fibers of the medial forebrain bundle ascending into the striatum, and within dense fiber networks and varicosities in the dorsal and ventral striatum (at protein level). Lower expression in the cortex (at protein level). Absent from the corpus callosum. Expressed throughout the retina at postnatal day 8.

It localises to the cell membrane. The protein resides in the cell projection. Its subcellular location is the neuron projection. It is found in the axon. The enzyme catalyses dopamine(out) + chloride(out) + Na(+)(out) = dopamine(in) + chloride(in) + Na(+)(in). It catalyses the reaction (R)-noradrenaline(out) + chloride(out) + Na(+)(out) = (R)-noradrenaline(in) + chloride(in) + Na(+)(in). The catalysed reaction is dopamine(out) + chloride(out) + 2 Na(+)(out) = dopamine(in) + chloride(in) + 2 Na(+)(in). Its activity is regulated as follows. Inhibited by amphetamine, bupropion, cocaine and ritalin. Inhibited by zinc ions. Functionally, mediates sodium- and chloride-dependent transport of dopamine. Also mediates sodium- and chloride-dependent transport of norepinephrine (also known as noradrenaline). Regulator of light-dependent retinal hyaloid vessel regression, downstream of OPN5 signaling. This is Sodium-dependent dopamine transporter (Slc6a3) from Mus musculus (Mouse).